The following is a 492-amino-acid chain: N-succinylglutamate 5-semialdehyde dehydrogenase (492 aa).

NAD(+) is bound at residue 220–225; sequence GSANTG. Active-site residues include E243 and C277.

Belongs to the aldehyde dehydrogenase family. AstD subfamily.

The catalysed reaction is N-succinyl-L-glutamate 5-semialdehyde + NAD(+) + H2O = N-succinyl-L-glutamate + NADH + 2 H(+). It participates in amino-acid degradation; L-arginine degradation via AST pathway; L-glutamate and succinate from L-arginine: step 4/5. Functionally, catalyzes the NAD-dependent reduction of succinylglutamate semialdehyde into succinylglutamate. The chain is N-succinylglutamate 5-semialdehyde dehydrogenase from Escherichia fergusonii (strain ATCC 35469 / DSM 13698 / CCUG 18766 / IAM 14443 / JCM 21226 / LMG 7866 / NBRC 102419 / NCTC 12128 / CDC 0568-73).